The following is a 229-amino-acid chain: Enolase-phosphatase E1 (229 aa).

Residues 208 to 218 (DTQSTHRQVSS) show a composition bias toward polar residues. The interval 208–229 (DTQSTHRQVSSFDDIHPEQIPT) is disordered. Basic and acidic residues predominate over residues 220–229 (DDIHPEQIPT).

It belongs to the HAD-like hydrolase superfamily. MasA/MtnC family. In terms of assembly, monomer. Mg(2+) is required as a cofactor.

The enzyme catalyses 5-methylsulfanyl-2,3-dioxopentyl phosphate + H2O = 1,2-dihydroxy-5-(methylsulfanyl)pent-1-en-3-one + phosphate. The protein operates within amino-acid biosynthesis; L-methionine biosynthesis via salvage pathway; L-methionine from S-methyl-5-thio-alpha-D-ribose 1-phosphate: step 3/6. It participates in amino-acid biosynthesis; L-methionine biosynthesis via salvage pathway; L-methionine from S-methyl-5-thio-alpha-D-ribose 1-phosphate: step 4/6. Functionally, bifunctional enzyme that catalyzes the enolization of 2,3-diketo-5-methylthiopentyl-1-phosphate (DK-MTP-1-P) into the intermediate 2-hydroxy-3-keto-5-methylthiopentenyl-1-phosphate (HK-MTPenyl-1-P), which is then dephosphorylated to form the acireductone 1,2-dihydroxy-3-keto-5-methylthiopentene (DHK-MTPene). This Cronobacter sakazakii (Enterobacter sakazakii) protein is Enolase-phosphatase E1.